The sequence spans 473 residues: Probable dipeptidase (473 aa).

Residue Cys-10 is part of the active site.

The protein belongs to the peptidase C69 family.

It carries out the reaction an L-aminoacyl-L-amino acid + H2O = 2 an L-alpha-amino acid. The polypeptide is Probable dipeptidase (Latilactobacillus sakei (Lactobacillus sakei)).